The sequence spans 394 residues: 1-deoxy-D-xylulose 5-phosphate reductoisomerase (394 aa).

NADPH is bound by residues Thr-12, Gly-13, Ser-14, Ile-15, Gly-38, and Asn-126. Residue Lys-127 participates in 1-deoxy-D-xylulose 5-phosphate binding. Glu-128 is an NADPH binding site. Mn(2+) is bound at residue Asp-151. Residues Ser-152, Glu-153, Ser-177, and His-200 each contribute to the 1-deoxy-D-xylulose 5-phosphate site. Residue Glu-153 participates in Mn(2+) binding. Gly-206 lines the NADPH pocket. 1-deoxy-D-xylulose 5-phosphate is bound by residues Ser-213, Asn-218, Lys-219, and Glu-222. Position 222 (Glu-222) interacts with Mn(2+).

Belongs to the DXR family. Requires Mg(2+) as cofactor. Mn(2+) is required as a cofactor.

It carries out the reaction 2-C-methyl-D-erythritol 4-phosphate + NADP(+) = 1-deoxy-D-xylulose 5-phosphate + NADPH + H(+). Its pathway is isoprenoid biosynthesis; isopentenyl diphosphate biosynthesis via DXP pathway; isopentenyl diphosphate from 1-deoxy-D-xylulose 5-phosphate: step 1/6. Catalyzes the NADPH-dependent rearrangement and reduction of 1-deoxy-D-xylulose-5-phosphate (DXP) to 2-C-methyl-D-erythritol 4-phosphate (MEP). The sequence is that of 1-deoxy-D-xylulose 5-phosphate reductoisomerase from Beutenbergia cavernae (strain ATCC BAA-8 / DSM 12333 / CCUG 43141 / JCM 11478 / NBRC 16432 / NCIMB 13614 / HKI 0122).